The primary structure comprises 138 residues: MSGTLLAFDFGTKSIGVAVGQRITGTARPLPAIKAQDGTPDWNLIERLLKEWQPDEIIVGLPLNMDGTEQPLTARARKFANRIHGRFGVEVKLHDERLSTVEARSGLFEQGGYRALNKGKVDSASAVIILESYFEQGY.

The protein belongs to the YqgF nuclease family.

The protein resides in the cytoplasm. Its function is as follows. Could be a nuclease involved in processing of the 5'-end of pre-16S rRNA. The protein is Putative pre-16S rRNA nuclease of Escherichia fergusonii (strain ATCC 35469 / DSM 13698 / CCUG 18766 / IAM 14443 / JCM 21226 / LMG 7866 / NBRC 102419 / NCTC 12128 / CDC 0568-73).